The chain runs to 100 residues: Ribosomal processing cysteine protease Prp (100 aa).

H16 (proton donor) is an active-site residue. C28 (nucleophile) is an active-site residue.

Belongs to the Prp family. As to quaternary structure, homodimer.

Its function is as follows. An essential cysteine protease that cleaves the N-terminus from ribosomal protein bL27. The polypeptide is Ribosomal processing cysteine protease Prp (Mycoplasma pneumoniae (strain ATCC 29342 / M129 / Subtype 1) (Mycoplasmoides pneumoniae)).